Reading from the N-terminus, the 491-residue chain is MNTQQLAKLRSIVPEMRRVRHIHFVGIGGAGMGGIAEVLANEGYQISGSDLAPNPVTQQLTSLGATIFFNHRPENVRDASVVVVSSAISADNPEIVAAHEARIPVIRRAEMLAELMRFRHGIAIAGTHGKTTTTAMVSSIYAEAGLDPTFVNGGLVKAAGVHARLGHSRYLIAEADESDASFLHLQPMVAIVTNIEADHMDTYHGDFENLKQTFINFLHNLPFYGRAVMCVDDPVIRELLPRVGRQTTTYGFSDDADVRVEDYQQIGPQGHFTLLRQGMPDLRVTLNAPGRHNALNATAAVAVATEEGIDDDAILRALESFQGTGRRFDFLGEFPLEPVNGKSGTAMLVDDYGHHPTEVDATIKAARAGWPDKNLVMLFQPHRYTRTRDLYDDFANVLTQVDALLMLDVYPAGETPIPGADSRSLCRTIRNRGKIDPILVSDPAQIATILAPVLTGNDLILVQGAGNVGKIARYLSEIKLKPQTQEEEQHG.

126–132 (GTHGKTT) contributes to the ATP binding site.

The protein belongs to the MurCDEF family.

The protein localises to the cytoplasm. The enzyme catalyses UDP-N-acetyl-alpha-D-muramate + L-alanine + ATP = UDP-N-acetyl-alpha-D-muramoyl-L-alanine + ADP + phosphate + H(+). The protein operates within cell wall biogenesis; peptidoglycan biosynthesis. Its function is as follows. Cell wall formation. This chain is UDP-N-acetylmuramate--L-alanine ligase, found in Salmonella arizonae (strain ATCC BAA-731 / CDC346-86 / RSK2980).